Here is a 276-residue protein sequence, read N- to C-terminus: uncharacterized protein (276 aa).

Positions 20–137 constitute an AB hydrolase-1 domain; that stretch reads PVLIFIPGAN…PPINTFLPDS (118 aa). Positions 57-76 are disordered; the sequence is GESELTEPLPDSASNPDSDY.

It belongs to the AB hydrolase superfamily.

This is an uncharacterized protein from Staphylococcus aureus (strain MW2).